We begin with the raw amino-acid sequence, 1002 residues long: DNA-directed RNA polymerase 1, mitochondrial (1002 aa).

Residues 1–21 (MWRYISKQAYSRKFRNSHDSA) constitute a mitochondrion transit peptide. Catalysis depends on residues Asp703, Lys778, and Asp935.

It belongs to the phage and mitochondrial RNA polymerase family. In terms of tissue distribution, the highest levels of expression are detected in the mature leaves. The level of expression is lowest in the cotyledons.

The protein localises to the mitochondrion. It carries out the reaction RNA(n) + a ribonucleoside 5'-triphosphate = RNA(n+1) + diphosphate. DNA-dependent RNA polymerase catalyzes the transcription of DNA into RNA using the four ribonucleoside triphosphates as substrates. This is DNA-directed RNA polymerase 1, mitochondrial (RPOT1) from Nicotiana sylvestris (Wood tobacco).